Consider the following 495-residue polypeptide: Pre-glycoprotein polyprotein GP complex (495 aa).

Residue glycine 2 is the site of N-myristoyl glycine; by host attachment. Residues 2–17 (GQFISFMQEIPIFLQE) lie on the Extracellular side of the membrane. A helical transmembrane segment spans residues 18 to 33 (ALNIALVAVSLICIVK). The Cytoplasmic portion of the chain corresponds to 34–58 (GLVNLYRCGLFQLMVFLVLAGRSCS). Zn(2+) is bound at residue cysteine 57. The Extracellular portion of the chain corresponds to 59–434 (EETFKIGMHT…QGRTPITLVD (376 aa)). Intrachain disulfides connect cysteine 92–cysteine 236, cysteine 281–cysteine 294, cysteine 303–cysteine 312, and cysteine 366–cysteine 387. 2 N-linked (GlcNAc...) asparagine; by host glycosylation sites follow: asparagine 95 and asparagine 188. 4 N-linked (GlcNAc...) asparagine; by host glycosylation sites follow: asparagine 367, asparagine 375, asparagine 392, and asparagine 397. A helical membrane pass occupies residues 435–455 (ICFWSTVFFTSTLFLHLIGFP). At 456–495 (THEHIRGEGCPLPHRLNSMGGCRCGKYLPLKKPTIWHRRH) the chain is on the cytoplasmic side. Residues histidine 457, histidine 459, cysteine 465, histidine 469, cysteine 477, cysteine 479, and histidine 495 each contribute to the Zn(2+) site.

This sequence belongs to the arenaviridae GPC protein family. As to quaternary structure, interacts with glycoprotein G2. Part of the GP complex (GP-C) together with glycoprotein G1 and glycoprotein G2. The GP-complex interacts with protein Z, which interacts with ribonucleocapsid; these interactions may induce virion budding. Homotrimer; disulfide-linked. In pre-fusion state, G1 homotrimers bind G2 homotrimers via ionic interactions. Part of the GP complex (GP-C) together with glycoprotein G2 and the stable signal peptide. The GP-complex interacts with protein Z, which interacts with ribonucleocapsid; these interactions may induce virion budding. In terms of assembly, homotrimer. Interacts with the stable signal peptide. In pre-fusion state, G2 homotrimers bind G1 homotrimers via ionic interactions. Part of the GP complex (GP-C) together with glycoprotein G1 and the stable signal peptide. Acidification in the endosome triggers rearrangements, which ultimately leads to a 6 helix bundle formed by the two heptad repeat domains (HR1 and HR2) in post-fusion state. The GP-complex interacts with protein Z, which interacts with ribonucleocapsid; these interactions may induce virion budding. Post-translationally, specific enzymatic cleavages in vivo yield mature proteins. GP-C polyprotein is cleaved in the endoplasmic reticulum by the host protease MBTPS1. Only cleaved glycoprotein is incorporated into virions. The SSP remains stably associated with the GP complex following cleavage by signal peptidase and plays crucial roles in the trafficking of GP through the secretory pathway. In terms of processing, myristoylation is necessary for GP2-mediated fusion activity.

Its subcellular location is the virion membrane. It is found in the host endoplasmic reticulum membrane. It localises to the host Golgi apparatus membrane. The protein localises to the host cell membrane. In terms of biological role, functions as a cleaved signal peptide that is retained as the third component of the GP complex (GP-C). Helps to stabilize the spike complex in its native conformation. The SSP is required for efficient glycoprotein expression, post-translational maturation cleavage of G1 and G2, glycoprotein transport to the cell surface plasma membrane, formation of infectious virus particles, and acid pH-dependent glycoprotein-mediated cell fusion. Its function is as follows. Forms the virion spikes together with glycoprotein G2. The glycoprotein spike trimers are connected to the underlying matrix. Interacts with the host receptor leading to virus endocytosis. Functionally, forms the virion spikes together with glycoprotein G1. The glycoprotein spike trimers are connected to the underlying matrix. Class I viral fusion protein that directs fusion of viral and host endosomal membranes, leading to delivery of the nucleocapsid into the cytoplasm. Membrane fusion is mediated by irreversible conformational changes induced by acidification. In Tacaribe virus (strain Franze-Fernandez) (TCRV), this protein is Pre-glycoprotein polyprotein GP complex.